Reading from the N-terminus, the 1223-residue chain is WD repeat-containing protein 11 (1223 aa).

2 WD repeats span residues 59–108 (KHKA…AQCE) and 111–154 (EHVK…KLWK). Phosphoserine occurs at positions 205 and 209. A WD 3 repeat occupies 354 to 393 (KTVRPFSMVCCPVNENAAALIVSDGRVMIWELKSAVCSRN). Phosphoserine occurs at positions 401 and 405. WD repeat units follow at residues 470 to 509 (RMCP…LHKE), 565 to 604 (NDES…LLRE), 707 to 744 (GSMG…SRGI), 746 to 786 (THRS…MVSS), 792 to 830 (NVTF…TCFR), and 892 to 939 (ALSN…HSLS).

As to quaternary structure, component of the complex WDR11 composed of C17orf75, FAM91A1 and WDR11; FAM91A1 and WDR11 are required for proper location of the complex. Interacts with GLI3; the interaction associateS EMX1 with GLI3. Interacts with TBC1D23; this interaction may be indirect and recruits TBC1D23 to AP-1-derived vesicles. Interacts (via the N-terminal and the central portion of the protein) with EMX1. In terms of tissue distribution, broadly expressed in various organs including brain, eye,ear, lung, heart, kideny and gonads. Cerebral cortex. The entire developing central nervous system, except for the spinal cord, reveals expression. Expressed in the neuroepithelium, including the diencephalic region that gives rise to hypothalamic neurons. In the adult brain, intense expression is restricted to the olfactory bulb, the olfaction-related piriform cortex, the granule cell layer of the cerebellum, and neurons of the hippocampal formation. The brain demonstrated expression scattered throughout the hypothalamus, sometimes in clusters of neurons.

The protein resides in the cytoplasm. The protein localises to the cytoskeleton. It localises to the cilium basal body. Its subcellular location is the nucleus. It is found in the cilium axoneme. The protein resides in the cytoplasmic vesicle. The protein localises to the golgi apparatus. It localises to the trans-Golgi network. Its function is as follows. Involved in the Hedgehog (Hh) signaling pathway, is essential for normal ciliogenesis. Regulates the proteolytic processing of GLI3 and cooperates with the transcription factor EMX1 in the induction of downstream Hh pathway gene expression and gonadotropin-releasing hormone production. WDR11 complex facilitates the tethering of Adaptor protein-1 complex (AP-1)-derived vesicles. WDR11 complex acts together with TBC1D23 to facilitate the golgin-mediated capture of vesicles generated using AP-1. In Mus musculus (Mouse), this protein is WD repeat-containing protein 11 (Wdr11).